A 134-amino-acid chain; its full sequence is Probable salivary secreted peptide (134 aa).

The N-terminal stretch at 1–24 (MGAQKTIAYLAIIAIAVIFAQVNT) is a signal peptide.

It localises to the secreted. The sequence is that of Probable salivary secreted peptide from Bombus ignitus (Bumblebee).